We begin with the raw amino-acid sequence, 244 residues long: tRNA (guanine-N(7)-)-methyltransferase (244 aa).

S-adenosyl-L-methionine contacts are provided by Glu-75, Glu-100, Asp-127, and Asp-150. Asp-150 is a catalytic residue. Substrate contacts are provided by residues Lys-154, Asp-186, and 223-226 (TRFE).

It belongs to the class I-like SAM-binding methyltransferase superfamily. TrmB family.

It carries out the reaction guanosine(46) in tRNA + S-adenosyl-L-methionine = N(7)-methylguanosine(46) in tRNA + S-adenosyl-L-homocysteine. Its pathway is tRNA modification; N(7)-methylguanine-tRNA biosynthesis. Its function is as follows. Catalyzes the formation of N(7)-methylguanine at position 46 (m7G46) in tRNA. The sequence is that of tRNA (guanine-N(7)-)-methyltransferase from Xylella fastidiosa (strain 9a5c).